We begin with the raw amino-acid sequence, 317 residues long: uncharacterized protein (317 aa).

At 1-13 (MKRVTGVFLTLLR) the chain is on the cytoplasmic side. Residues 14 to 34 (FSQFASSVLVMSLLAYAIHAY) form a helical membrane-spanning segment. Residues 35 to 49 (GNRGNKKTNFTLATG) are Extracellular-facing. Asn-43 carries an N-linked (GlcNAc...) asparagine glycan. Residues 50-70 (VISVFYLIALGILCLALPTLI) form a helical membrane-spanning segment. Residue Tyr-71 is a topological domain, cytoplasmic. The helical transmembrane segment at 72-92 (IGMYFCAELIVCMLWLAAFVV) threads the bilayer. The Extracellular segment spans residues 93–133 (LAKAQGERSCSNTNADGLYYNPYSGQYTADSHRRACNSSQA). N-linked (GlcNAc...) asparagine glycosylation occurs at Asn-129. Residues 134 to 154 (AIAFSGLCFVLFLISVILLGI) traverse the membrane as a helical segment. The Cytoplasmic portion of the chain corresponds to 155 to 317 (NVLTPIRKRY…EPNRNVNQMP (163 aa)). The tract at residues 204 to 317 (RTGDVEAGAG…EPNRNVNQMP (114 aa)) is disordered. The segment covering 239-250 (TTTTNTRYTTTT) has biased composition (low complexity). Polar residues predominate over residues 256 to 282 (RYTTNDRNPGSANVANSAVDQHAYSTD). Residues 284–295 (SGDRSYQEKVTE) show a composition bias toward basic and acidic residues. Polar residues predominate over residues 302-317 (MSGSTAEPNRNVNQMP).

The protein localises to the membrane. This is an uncharacterized protein from Saccharomyces cerevisiae (strain ATCC 204508 / S288c) (Baker's yeast).